We begin with the raw amino-acid sequence, 321 residues long: Aspartate carbamoyltransferase catalytic subunit (321 aa).

Positions 60 and 61 each coordinate carbamoyl phosphate. Residue lysine 88 participates in L-aspartate binding. Carbamoyl phosphate contacts are provided by arginine 110, histidine 138, and glutamine 141. L-aspartate contacts are provided by arginine 171 and arginine 225. Carbamoyl phosphate is bound by residues glycine 266 and proline 267.

It belongs to the aspartate/ornithine carbamoyltransferase superfamily. ATCase family. In terms of assembly, heterododecamer (2C3:3R2) of six catalytic PyrB chains organized as two trimers (C3), and six regulatory PyrI chains organized as three dimers (R2).

It carries out the reaction carbamoyl phosphate + L-aspartate = N-carbamoyl-L-aspartate + phosphate + H(+). It functions in the pathway pyrimidine metabolism; UMP biosynthesis via de novo pathway; (S)-dihydroorotate from bicarbonate: step 2/3. In terms of biological role, catalyzes the condensation of carbamoyl phosphate and aspartate to form carbamoyl aspartate and inorganic phosphate, the committed step in the de novo pyrimidine nucleotide biosynthesis pathway. The protein is Aspartate carbamoyltransferase catalytic subunit of Sorangium cellulosum (strain So ce56) (Polyangium cellulosum (strain So ce56)).